The chain runs to 208 residues: Ribosome maturation factor RimP (208 aa).

This sequence belongs to the RimP family.

The protein localises to the cytoplasm. Functionally, required for maturation of 30S ribosomal subunits. The chain is Ribosome maturation factor RimP from Bartonella tribocorum (strain CIP 105476 / IBS 506).